Reading from the N-terminus, the 436-residue chain is Lactonohydrolase oryL (436 aa).

The N-terminal stretch at 1 to 27 (MLSYTSHCLQALLGVASLPYRQYQAYS) is a signal peptide.

This sequence belongs to the SMP-30/CGR1 family.

It participates in secondary metabolite biosynthesis. In terms of biological role, lactonohydrolase; part of the gene cluster that mediates the biosynthesis of oryzines, natural products with an unusual maleidride backbone. The two subunits of the fungal fatty acid synthase oryfasA and oryfasB probably form octenoic acid. This fatty acid is most likely activated by the acyl-CoA ligase oryP to give octenyl-CoA before the citrate synthase-like protein oryE catalyzes condensation with oxaloacetate to form tricarboxylic acid. The next steps of the pathways are conjectural, but a favorite possible route has been proposed, beginning with decarboxylation and concomitant dehydration by the decarboxylase oryM, followed by tautomerization, which may lead to the production of a diene intermediate. Reduction of this diene intermediate could give the known metabolite piliformic acid. On the pathway to oryzine B and oryzine A, however, hydroxylation of the diene by the alpha-ketoglutarate-dependent dioxygenase oryG and lactonisation by the lactonohydrolases oryH or oryL could give oryzine B directly. Finally, enoyl reduction by the dehydrogenase oryD would then convert oryzine B into oryzine A. The protein is Lactonohydrolase oryL of Aspergillus oryzae (strain ATCC 42149 / RIB 40) (Yellow koji mold).